We begin with the raw amino-acid sequence, 443 residues long: Signal recognition particle 54 kDa protein (443 aa).

GTP contacts are provided by residues G104–T111, D184–R188, and T242–D245.

It belongs to the GTP-binding SRP family. SRP54 subfamily. In terms of assembly, part of the signal recognition particle protein translocation system, which is composed of SRP and FtsY. Archaeal SRP consists of a 7S RNA molecule of 300 nucleotides and two protein subunits: SRP54 and SRP19.

It is found in the cytoplasm. The enzyme catalyses GTP + H2O = GDP + phosphate + H(+). Involved in targeting and insertion of nascent membrane proteins into the cytoplasmic membrane. Binds to the hydrophobic signal sequence of the ribosome-nascent chain (RNC) as it emerges from the ribosomes. The SRP-RNC complex is then targeted to the cytoplasmic membrane where it interacts with the SRP receptor FtsY. This chain is Signal recognition particle 54 kDa protein, found in Methanosarcina mazei (strain ATCC BAA-159 / DSM 3647 / Goe1 / Go1 / JCM 11833 / OCM 88) (Methanosarcina frisia).